Reading from the N-terminus, the 364-residue chain is MDSSRTIGLYFDSAHSSSNLLAFPIVLQDTGDGKKQIAPQYRIQRLDSWTDSKEDSVFITTYGFIFQVGNEEATVGMINDNPKRELLSAAMLCLGSVPNTGDLVELARACLTMVVTCKKSATNTERMVFSVVQAPQVLQSCRVVANKYSSVNAVKHVKAPEKIPGSGTLEYKVNFVSLTVVPKKDVYKIPTAVLKVSGSSLYNLALNVTINVEVDSRSPLVKSLSKSDSGYYANLFLHIGLMTTVDRRGKKVTFDKLEKKIRSLDLSVGLSDVLGPSVLVKARGARTKLLAPFFSSSGTACYPIANASPQVAKILWSQTACLRSVKIIIQAGTQRTVAVTADHEVTSTKLEKGHTLAKYNPFKK.

The FPIV motif motif lies at Phe-23 to Val-26.

It belongs to the morbillivirus/respirovirus/rubulavirus M protein family.

Its subcellular location is the virion. In terms of biological role, the M protein has a crucial role in virus assembly and interacts with the RNP complex as well as with the viral membrane. This chain is Matrix protein (M), found in Newcastle disease virus (strain Beaudette C/45) (NDV).